The sequence spans 362 residues: Beta-ketoacyl-[acyl-carrier-protein] synthase III 2 (362 aa).

Residues cysteine 113 and histidine 251 contribute to the active site. The tract at residues 252 to 256 (QANIR) is ACP-binding. The active site involves asparagine 281.

It belongs to the thiolase-like superfamily. FabH family. As to quaternary structure, homodimer.

The protein localises to the cytoplasm. The catalysed reaction is malonyl-[ACP] + acetyl-CoA + H(+) = 3-oxobutanoyl-[ACP] + CO2 + CoA. The protein operates within lipid metabolism; fatty acid biosynthesis. Catalyzes the condensation reaction of fatty acid synthesis by the addition to an acyl acceptor of two carbons from malonyl-ACP. Catalyzes the first condensation reaction which initiates fatty acid synthesis and may therefore play a role in governing the total rate of fatty acid production. Possesses both acetoacetyl-ACP synthase and acetyl transacylase activities. Its substrate specificity determines the biosynthesis of branched-chain and/or straight-chain of fatty acids. The sequence is that of Beta-ketoacyl-[acyl-carrier-protein] synthase III 2 from Vibrio vulnificus (strain CMCP6).